We begin with the raw amino-acid sequence, 272 residues long: Ribosomal RNA small subunit methyltransferase A (272 aa).

The S-adenosyl-L-methionine site is built by asparagine 15, isoleucine 17, glycine 42, glutamate 64, aspartate 90, and asparagine 109.

The protein belongs to the class I-like SAM-binding methyltransferase superfamily. rRNA adenine N(6)-methyltransferase family. RsmA subfamily.

It is found in the cytoplasm. It carries out the reaction adenosine(1518)/adenosine(1519) in 16S rRNA + 4 S-adenosyl-L-methionine = N(6)-dimethyladenosine(1518)/N(6)-dimethyladenosine(1519) in 16S rRNA + 4 S-adenosyl-L-homocysteine + 4 H(+). Specifically dimethylates two adjacent adenosines (A1518 and A1519) in the loop of a conserved hairpin near the 3'-end of 16S rRNA in the 30S particle. May play a critical role in biogenesis of 30S subunits. This chain is Ribosomal RNA small subunit methyltransferase A, found in Wolbachia sp. subsp. Drosophila simulans (strain wRi).